Here is a 340-residue protein sequence, read N- to C-terminus: Ferredoxin--NADP reductase (340 aa).

D33, Q41, Y46, A86, F120, D286, and T327 together coordinate FAD.

The protein belongs to the ferredoxin--NADP reductase type 2 family. Homodimer. Requires FAD as cofactor.

The enzyme catalyses 2 reduced [2Fe-2S]-[ferredoxin] + NADP(+) + H(+) = 2 oxidized [2Fe-2S]-[ferredoxin] + NADPH. This is Ferredoxin--NADP reductase from Rickettsia conorii (strain ATCC VR-613 / Malish 7).